We begin with the raw amino-acid sequence, 215 residues long: Thiamine-phosphate synthase (215 aa).

Residues 43–47 and asparagine 75 contribute to the 4-amino-2-methyl-5-(diphosphooxymethyl)pyrimidine site; that span reads QLRDK. Positions 76 and 95 each coordinate Mg(2+). Serine 114 contributes to the 4-amino-2-methyl-5-(diphosphooxymethyl)pyrimidine binding site. 141 to 143 contributes to the 2-[(2R,5Z)-2-carboxy-4-methylthiazol-5(2H)-ylidene]ethyl phosphate binding site; it reads TPT. Lysine 144 provides a ligand contact to 4-amino-2-methyl-5-(diphosphooxymethyl)pyrimidine. Glycine 172 is a binding site for 2-[(2R,5Z)-2-carboxy-4-methylthiazol-5(2H)-ylidene]ethyl phosphate.

Belongs to the thiamine-phosphate synthase family. It depends on Mg(2+) as a cofactor.

It carries out the reaction 2-[(2R,5Z)-2-carboxy-4-methylthiazol-5(2H)-ylidene]ethyl phosphate + 4-amino-2-methyl-5-(diphosphooxymethyl)pyrimidine + 2 H(+) = thiamine phosphate + CO2 + diphosphate. The catalysed reaction is 2-(2-carboxy-4-methylthiazol-5-yl)ethyl phosphate + 4-amino-2-methyl-5-(diphosphooxymethyl)pyrimidine + 2 H(+) = thiamine phosphate + CO2 + diphosphate. The enzyme catalyses 4-methyl-5-(2-phosphooxyethyl)-thiazole + 4-amino-2-methyl-5-(diphosphooxymethyl)pyrimidine + H(+) = thiamine phosphate + diphosphate. Its pathway is cofactor biosynthesis; thiamine diphosphate biosynthesis; thiamine phosphate from 4-amino-2-methyl-5-diphosphomethylpyrimidine and 4-methyl-5-(2-phosphoethyl)-thiazole: step 1/1. In terms of biological role, condenses 4-methyl-5-(beta-hydroxyethyl)thiazole monophosphate (THZ-P) and 2-methyl-4-amino-5-hydroxymethyl pyrimidine pyrophosphate (HMP-PP) to form thiamine monophosphate (TMP). This Streptomyces avermitilis (strain ATCC 31267 / DSM 46492 / JCM 5070 / NBRC 14893 / NCIMB 12804 / NRRL 8165 / MA-4680) protein is Thiamine-phosphate synthase.